The primary structure comprises 432 residues: Adenylosuccinate synthetase (432 aa).

GTP contacts are provided by residues 12–18 and 40–42; these read GDEGKGK and GHT. The active-site Proton acceptor is the aspartate 13. Mg(2+)-binding residues include aspartate 13 and glycine 40. IMP contacts are provided by residues 13–16, 38–41, threonine 132, arginine 146, glutamine 226, threonine 241, and arginine 305; these read DEGK and NAGH. The Proton donor role is filled by histidine 41. Position 301-307 (301-307) interacts with substrate; it reads TVTGRKR. Residues arginine 307, 333-335, and 415-417 each bind GTP; these read KLD and STS.

Belongs to the adenylosuccinate synthetase family. In terms of assembly, homodimer. Mg(2+) is required as a cofactor.

The protein localises to the cytoplasm. The enzyme catalyses IMP + L-aspartate + GTP = N(6)-(1,2-dicarboxyethyl)-AMP + GDP + phosphate + 2 H(+). It participates in purine metabolism; AMP biosynthesis via de novo pathway; AMP from IMP: step 1/2. Its function is as follows. Plays an important role in the de novo pathway of purine nucleotide biosynthesis. Catalyzes the first committed step in the biosynthesis of AMP from IMP. The sequence is that of Adenylosuccinate synthetase from Sinorhizobium medicae (strain WSM419) (Ensifer medicae).